The primary structure comprises 204 residues: CASP-like protein 2U1 (204 aa).

Residues 1–36 (MGVLGGDAHVPIGSQVSPGSVVVTNNESFGHRKLLK) are Cytoplasmic-facing. A helical membrane pass occupies residues 37-57 (GVDFLVRIKAFAFCLAVIVLL). The Extracellular portion of the chain corresponds to 58–84 (KNNVQTTVIAPGIVLQAKYNNTKAPVS). The N-linked (GlcNAc...) asparagine glycan is linked to asparagine 77. The chain crosses the membrane as a helical span at residues 85 to 105 (LLVLASICCGYAFLQAVVSLL). The Cytoplasmic portion of the chain corresponds to 106–117 (SFIRDKRVLNNT). Residues 118-138 (VLAWLTFLLDQVLTYLLLGSA) traverse the membrane as a helical segment. Residues 139–170 (AATAEAAYIAKRGEDKVQWKAVCGPFKRFCDH) are Extracellular-facing. A helical membrane pass occupies residues 171-191 (FAATVFLSFIAVIAFAVSAAI). At 192–204 (SAYYLFRRSKGFK) the chain is on the cytoplasmic side.

Belongs to the Casparian strip membrane proteins (CASP) family. In terms of assembly, homodimer and heterodimers.

It is found in the cell membrane. This Selaginella moellendorffii (Spikemoss) protein is CASP-like protein 2U1.